A 193-amino-acid chain; its full sequence is Thymidine kinase (193 aa).

ATP contacts are provided by residues 9-16 and 87-90; these read ASMNAGKS and DEAQ. E88 functions as the Proton acceptor in the catalytic mechanism. Zn(2+) is bound by residues C145, C147, C182, and H185.

This sequence belongs to the thymidine kinase family. As to quaternary structure, homotetramer.

The protein localises to the cytoplasm. The catalysed reaction is thymidine + ATP = dTMP + ADP + H(+). This chain is Thymidine kinase, found in Zymomonas mobilis subsp. mobilis (strain ATCC 31821 / ZM4 / CP4).